Here is a 471-residue protein sequence, read N- to C-terminus: RuvB-like protein 2 (471 aa).

75 to 82 (GPPSTGKT) is an ATP binding site.

Belongs to the RuvB family. Probably forms a homohexamer. Interacts with RVB1 and may form heterododecamers with RVB1. Component of the SWR1 chromatin remodeling complex composed of at least ACT1, ARP4, RVB1, RVB2, ARP6, YAF9, VPS71, VPS72, SWC3, SWC4, SWC5, SWC7 and SWR1, and perhaps BDF1. Component of the chromatin-remodeling INO80 complex, at least composed of ARP4, ARP5, ARP8, RVB1, RVB2, TAF14, NHP10, IES1, IES3, IES4, IES6, ACT1, IES2, IES5 and INO80. Also belongs to the R2TP complex composed of at least RVB1, RVB2, TAH1 and PIH1. Interacts with SPT15/TBP.

The protein resides in the nucleus. The protein localises to the nucleoplasm. The catalysed reaction is ATP + H2O = ADP + phosphate + H(+). In terms of biological role, DNA helicase which participates in several chromatin remodeling complexes, including the SWR1 and the INO80 complexes. The SWR1 complex mediates the ATP-dependent exchange of histone H2A for the H2A variant HZT1 leading to transcriptional regulation of selected genes by chromatin remodeling. The INO80 complex remodels chromatin by shifting nucleosomes. Its ability to induce transcription of some phosphate-responsive genes is modulated by inositol polyphosphates. The INO80 complex is involved in DNA repair by associating to 'Ser-129' phosphorylated H2A histones as a response to DNA damage. During transcription may recruit SPT15/TBP to the TATA-boxes of involved genes. Required for box C/D and box H/ACA snoRNA accumulation and involved in pre-rRNA processing. This chain is RuvB-like protein 2 (RVB2), found in Saccharomyces cerevisiae (strain ATCC 204508 / S288c) (Baker's yeast).